The following is a 121-amino-acid chain: Large ribosomal subunit protein uL14 (121 aa).

This sequence belongs to the universal ribosomal protein uL14 family. In terms of assembly, part of the 50S ribosomal subunit. Forms a cluster with proteins L3 and L19. In the 70S ribosome, L14 and L19 interact and together make contacts with the 16S rRNA in bridges B5 and B8.

In terms of biological role, binds to 23S rRNA. Forms part of two intersubunit bridges in the 70S ribosome. The sequence is that of Large ribosomal subunit protein uL14 from Synechococcus sp. (strain CC9902).